The sequence spans 86 residues: Chymotrypsin inhibitor (86 aa).

Positions 1 to 16 (MKTLCIFLVLVVAVAA) are cleaved as a signal peptide. 4 disulfide bridges follow: C26–C58, C38–C50, C42–C82, and C60–C76. The region spanning 26 to 82 (CPPNKEFGSYGDCPPSCLKNPPNFCTLKLNYGCKCKEGYVLTRYQDYESDCIKPEEC) is the TIL domain.

Belongs to the serine protease inhibitor-like (TIL domain-containing) family. As to expression, only expressed in fat body.

The protein resides in the secreted. Serine protease inhibitor that inhibits chymotrypsin (IC(50)=34.13 nM, Ki=49.85 nM), microbial serine proteases (subtilisin A (IC(50)=21.31 nM, Ki=20.51 nM) and proteinase K (IC(50)=52.56 nM, Ki=65.42 nM)), as well as human neutrophil elastase (IC(50)=11.54 nM, Ki=8.74 nM), and porcine pancreatic elastase (IC(50)=19.07 nM, Ki=11.32 nM). The sequence is that of Chymotrypsin inhibitor from Araneus ventricosus (Orbweaver spider).